We begin with the raw amino-acid sequence, 223 residues long: Holliday junction branch migration complex subunit RuvA (223 aa).

The interval 1-64 (MIGKLTGRLD…EDLLQLFGFL (64 aa)) is domain I. The interval 65 to 143 (SPYEKEWHRL…AVMAMGGTLD (79 aa)) is domain II. Residues 144 to 171 (DAMDDVVDDMPGESAAPAPAPQPRAPKR) are flexible linker. Positions 148–177 (DVVDDMPGESAAPAPAPQPRAPKRPASNAQ) are disordered. Residues 172-223 (PASNAQAEALSALQNLGYGPSDAAQAVAQAAESASNTPELIRAALRLLAPKE) form a domain III region.

Belongs to the RuvA family. As to quaternary structure, homotetramer. Forms an RuvA(8)-RuvB(12)-Holliday junction (HJ) complex. HJ DNA is sandwiched between 2 RuvA tetramers; dsDNA enters through RuvA and exits via RuvB. An RuvB hexamer assembles on each DNA strand where it exits the tetramer. Each RuvB hexamer is contacted by two RuvA subunits (via domain III) on 2 adjacent RuvB subunits; this complex drives branch migration. In the full resolvosome a probable DNA-RuvA(4)-RuvB(12)-RuvC(2) complex forms which resolves the HJ.

It is found in the cytoplasm. Functionally, the RuvA-RuvB-RuvC complex processes Holliday junction (HJ) DNA during genetic recombination and DNA repair, while the RuvA-RuvB complex plays an important role in the rescue of blocked DNA replication forks via replication fork reversal (RFR). RuvA specifically binds to HJ cruciform DNA, conferring on it an open structure. The RuvB hexamer acts as an ATP-dependent pump, pulling dsDNA into and through the RuvAB complex. HJ branch migration allows RuvC to scan DNA until it finds its consensus sequence, where it cleaves and resolves the cruciform DNA. In Jannaschia sp. (strain CCS1), this protein is Holliday junction branch migration complex subunit RuvA.